A 216-amino-acid chain; its full sequence is Cytidylate kinase (216 aa).

10-18 (GPAAAGKST) is an ATP binding site.

Belongs to the cytidylate kinase family. Type 1 subfamily.

It is found in the cytoplasm. It catalyses the reaction CMP + ATP = CDP + ADP. The catalysed reaction is dCMP + ATP = dCDP + ADP. The sequence is that of Cytidylate kinase from Macrococcus caseolyticus (strain JCSC5402) (Macrococcoides caseolyticum).